The following is a 98-amino-acid chain: Integration host factor subunit alpha (98 aa).

It belongs to the bacterial histone-like protein family. As to quaternary structure, heterodimer of an alpha and a beta chain.

In terms of biological role, this protein is one of the two subunits of integration host factor, a specific DNA-binding protein that functions in genetic recombination as well as in transcriptional and translational control. The protein is Integration host factor subunit alpha of Mannheimia succiniciproducens (strain KCTC 0769BP / MBEL55E).